A 680-amino-acid polypeptide reads, in one-letter code: DNA-directed RNA polymerase subunit beta' (680 aa).

The Zn(2+) site is built by cysteine 69, cysteine 71, cysteine 87, and cysteine 90. Mg(2+) contacts are provided by aspartate 489, aspartate 491, and aspartate 493.

This sequence belongs to the RNA polymerase beta' chain family. RpoC1 subfamily. In terms of assembly, in plastids the minimal PEP RNA polymerase catalytic core is composed of four subunits: alpha, beta, beta', and beta''. When a (nuclear-encoded) sigma factor is associated with the core the holoenzyme is formed, which can initiate transcription. Mg(2+) is required as a cofactor. Zn(2+) serves as cofactor.

It localises to the plastid. The protein resides in the chloroplast. It carries out the reaction RNA(n) + a ribonucleoside 5'-triphosphate = RNA(n+1) + diphosphate. Its function is as follows. DNA-dependent RNA polymerase catalyzes the transcription of DNA into RNA using the four ribonucleoside triphosphates as substrates. The chain is DNA-directed RNA polymerase subunit beta' from Cucumis sativus (Cucumber).